The following is a 206-amino-acid chain: Triafestin-2 (206 aa).

Residues 1–18 (MKTILAVIFFGILAFAFA) form the signal peptide. Asparagine 25, asparagine 55, and asparagine 178 each carry an N-linked (GlcNAc...) asparagine glycan.

This sequence belongs to the calycin superfamily. Triabin family. As to quaternary structure, interacts with host coagulation factor XII (F12) (inactive and activated) (via amino acids 1-77). Interacts with host high molecular weight kininogen (KNG1) (via amino acids 402-532). In terms of tissue distribution, salivary gland (at protein level).

It localises to the secreted. Zn(2+) modulates binding to host coagulation factor XII (F12) and high molecular weight kininogen (KNG1). Its function is as follows. Suppresses activation of the host plasma kallikrein-kinin system, leading to inhibition of the intrinsic coagulation pathway. Blocks host coagulation factor XII (F12) and prekallikrein (KLKB1) reciprocal activation without affecting their amidolytic activities. Blocks binding of host F12 and high molecular weight kininogen (KNG1) to negatively charged surfaces. Attenuates generation of bradykinin by interfering with activation of host kallikrein-kinin system. This Triatoma infestans (Assassin bug) protein is Triafestin-2.